We begin with the raw amino-acid sequence, 333 residues long: 4-hydroxy-2-oxovalerate aldolase (333 aa).

The Pyruvate carboxyltransferase domain maps to 4-254 (VKIFDLTLRD…DCGIDLYKTM (251 aa)). 12–13 (RD) is a binding site for substrate. Residue Asp13 participates in Mn(2+) binding. The active-site Proton acceptor is the His16. His193 contributes to the substrate binding site. Residues His193 and His195 each coordinate Mn(2+). Residue Tyr284 participates in substrate binding.

Belongs to the 4-hydroxy-2-oxovalerate aldolase family.

The enzyme catalyses (S)-4-hydroxy-2-oxopentanoate = acetaldehyde + pyruvate. The sequence is that of 4-hydroxy-2-oxovalerate aldolase from Desulfitobacterium hafniense (strain DSM 10664 / DCB-2).